The chain runs to 245 residues: Eukaryotic translation initiation factor 6 (245 aa).

The protein belongs to the eIF-6 family. In terms of assembly, monomer. Associates with the 60S ribosomal subunit.

Its subcellular location is the cytoplasm. It is found in the nucleus. It localises to the nucleolus. In terms of biological role, binds to the 60S ribosomal subunit and prevents its association with the 40S ribosomal subunit to form the 80S initiation complex in the cytoplasm. May also be involved in ribosome biogenesis. The sequence is that of Eukaryotic translation initiation factor 6 from Ostreococcus lucimarinus (strain CCE9901).